The sequence spans 274 residues: Cytochrome b-c1 complex subunit Rieske, mitochondrial (274 aa).

The segment at 29–49 is disordered; sequence XXXXXXXXTPEPPVLDPKRPI. The Mitochondrial matrix segment spans residues 79 to 103; sequence SHTDIKVPDFSDYRRSEVLDKTKSS. The helical transmembrane segment at 104–140 threads the bilayer; that stretch reads RESSDARKVFSYMVTATTAVGVTYAAKSIVTQFISSM. Over 141–274 the chain is Mitochondrial intermembrane; sequence SASADVLAMS…FLSDDMVVVG (134 aa). In terms of domain architecture, Rieske spans 187–272; the sequence is EAAVELSQLR…YEFLSDDMVV (86 aa). [2Fe-2S] cluster is bound by residues Cys217, His219, Cys236, His239, and Ser241. Cys222 and Cys238 form a disulfide bridge.

The protein belongs to the Rieske iron-sulfur protein family. As to quaternary structure, component of the ubiquinol-cytochrome c oxidoreductase (cytochrome b-c1 complex, complex III, CIII), a multisubunit enzyme composed of 11 subunits. The complex is composed of 3 respiratory subunits cytochrome b, cytochrome c1 and Rieske protein UQCRFS1, 2 core protein subunits UQCRC1/QCR1 and UQCRC2/QCR2, and 6 low-molecular weight protein subunits UQCRH/QCR6, UQCRB/QCR7, UQCRQ/QCR8, UQCR10/QCR9, UQCR11/QCR10 and subunit 9, the cleavage product of Rieske protein UQCRFS1. The complex exists as an obligatory dimer and forms supercomplexes (SCs) in the inner mitochondrial membrane with NADH-ubiquinone oxidoreductase (complex I, CI) and cytochrome c oxidase (complex IV, CIV), resulting in different assemblies (supercomplex SCI(1)III(2)IV(1) and megacomplex MCI(2)III(2)IV(2)). Incorporation of the Rieske protein UQCRFS1 is the penultimate step in complex III assembly. Interacts with TTC19, which is involved in the clearance of UQCRFS1 fragments. In terms of assembly, component of the ubiquinol-cytochrome c oxidoreductase (cytochrome b-c1 complex, complex III, CIII). Subunit 9 corresponds to the mitochondrial targeting sequence (MTS) of Rieske protein UQCRFS1. It is retained after processing and incorporated inside complex III, where it remains bound to the complex and localizes between the 2 core subunits UQCRC1/QCR1 and UQCRC2/QCR2. [2Fe-2S] cluster serves as cofactor. Post-translationally, proteolytic processing is necessary for the correct insertion of UQCRFS1 in the complex III dimer. Several fragments are generated during UQCRFS1 insertion, most probably due to the endogenous matrix-processing peptidase (MPP) activity of the 2 core protein subunits UQCRC1/QCR1 and UQCRC2/QCR2, which are homologous to the 2 mitochondrial-processing peptidase (MPP) subunits beta-MPP and alpha-MPP respectively. The action of the protease is also necessary for the clearance of the UQCRFS1 fragments.

The protein resides in the mitochondrion inner membrane. It carries out the reaction a quinol + 2 Fe(III)-[cytochrome c](out) = a quinone + 2 Fe(II)-[cytochrome c](out) + 2 H(+)(out). Component of the ubiquinol-cytochrome c oxidoreductase, a multisubunit transmembrane complex that is part of the mitochondrial electron transport chain which drives oxidative phosphorylation. The respiratory chain contains 3 multisubunit complexes succinate dehydrogenase (complex II, CII), ubiquinol-cytochrome c oxidoreductase (cytochrome b-c1 complex, complex III, CIII) and cytochrome c oxidase (complex IV, CIV), that cooperate to transfer electrons derived from NADH and succinate to molecular oxygen, creating an electrochemical gradient over the inner membrane that drives transmembrane transport and the ATP synthase. The cytochrome b-c1 complex catalyzes electron transfer from ubiquinol to cytochrome c, linking this redox reaction to translocation of protons across the mitochondrial inner membrane, with protons being carried across the membrane as hydrogens on the quinol. In the process called Q cycle, 2 protons are consumed from the matrix, 4 protons are released into the intermembrane space and 2 electrons are passed to cytochrome c. The Rieske protein is a catalytic core subunit containing a [2Fe-2S] iron-sulfur cluster. It cycles between 2 conformational states during catalysis to transfer electrons from the quinol bound in the Q(0) site in cytochrome b to cytochrome c1. Incorporation of UQCRFS1 is the penultimate step in complex III assembly. Functionally, component of the ubiquinol-cytochrome c oxidoreductase (cytochrome b-c1 complex, complex III, CIII). UQCRFS1 undergoes proteolytic processing once it is incorporated in the complex III dimer. One of the fragments, called subunit 9, corresponds to its mitochondrial targeting sequence (MTS). The proteolytic processing is necessary for the correct insertion of UQCRFS1 in the complex III dimer, but the persistence of UQCRFS1-derived fragments may prevent newly imported UQCRFS1 to be processed and assembled into complex III and is detrimental for the complex III structure and function. The protein is Cytochrome b-c1 complex subunit Rieske, mitochondrial (UQCRFS1) of Saimiri sciureus (Common squirrel monkey).